We begin with the raw amino-acid sequence, 283 residues long: Pantothenate synthetase (283 aa).

Residue 30 to 37 participates in ATP binding; it reads MGYFHEGH. Catalysis depends on H37, which acts as the Proton donor. Q61 lines the (R)-pantoate pocket. A beta-alanine-binding site is contributed by Q61. An ATP-binding site is contributed by 147–150; sequence GEKD. Position 153 (Q153) interacts with (R)-pantoate. Residues V176 and 184–187 contribute to the ATP site; that span reads MSSR.

The protein belongs to the pantothenate synthetase family. In terms of assembly, homodimer.

It localises to the cytoplasm. It carries out the reaction (R)-pantoate + beta-alanine + ATP = (R)-pantothenate + AMP + diphosphate + H(+). Its pathway is cofactor biosynthesis; (R)-pantothenate biosynthesis; (R)-pantothenate from (R)-pantoate and beta-alanine: step 1/1. Catalyzes the condensation of pantoate with beta-alanine in an ATP-dependent reaction via a pantoyl-adenylate intermediate. The chain is Pantothenate synthetase from Syntrophobacter fumaroxidans (strain DSM 10017 / MPOB).